We begin with the raw amino-acid sequence, 369 residues long: Anhydro-N-acetylmuramic acid kinase (369 aa).

12 to 19 (GTSMDGID) provides a ligand contact to ATP.

This sequence belongs to the anhydro-N-acetylmuramic acid kinase family.

It carries out the reaction 1,6-anhydro-N-acetyl-beta-muramate + ATP + H2O = N-acetyl-D-muramate 6-phosphate + ADP + H(+). It functions in the pathway amino-sugar metabolism; 1,6-anhydro-N-acetylmuramate degradation. The protein operates within cell wall biogenesis; peptidoglycan recycling. Its function is as follows. Catalyzes the specific phosphorylation of 1,6-anhydro-N-acetylmuramic acid (anhMurNAc) with the simultaneous cleavage of the 1,6-anhydro ring, generating MurNAc-6-P. Is required for the utilization of anhMurNAc either imported from the medium or derived from its own cell wall murein, and thus plays a role in cell wall recycling. In Shewanella sediminis (strain HAW-EB3), this protein is Anhydro-N-acetylmuramic acid kinase.